A 281-amino-acid chain; its full sequence is DegV domain-containing protein spr0652 (281 aa).

The DegV domain maps to 3-280; that stretch reads WKIIADSGCD…EGGLLMGYEI (278 aa). Positions 63 and 91 each coordinate hexadecanoate.

Functionally, may bind long-chain fatty acids, such as palmitate, and may play a role in lipid transport or fatty acid metabolism. This Streptococcus pneumoniae (strain ATCC BAA-255 / R6) protein is DegV domain-containing protein spr0652.